We begin with the raw amino-acid sequence, 303 residues long: Recombination-associated protein RdgC (303 aa).

This sequence belongs to the RdgC family.

The protein resides in the cytoplasm. The protein localises to the nucleoid. Functionally, may be involved in recombination. In Salmonella newport (strain SL254), this protein is Recombination-associated protein RdgC.